Reading from the N-terminus, the 63-residue chain is Large ribosomal subunit protein uL29 (63 aa).

Belongs to the universal ribosomal protein uL29 family.

The protein is Large ribosomal subunit protein uL29 of Haemophilus ducreyi (strain 35000HP / ATCC 700724).